The sequence spans 842 residues: MPFNITSVKTSSNGVWQGDNPLNFAFPLLIVQTALIIAVSRFLAVLFKPLRQPKVIAEIVGGILLGPSALGRNMAYMDRIFPKWSMPILESVASIGLLFFLFLVGLELDLSSIRRSGKRAFGIAVAGITLPFIAGVGVAFVIRNTLYTAADKPGYAEFLVFMGVALSITAFPVLARILAELKLLTTQIGETAMAAAAFNDVAAWILLALAVALAGNGGEGGGEKKSPLVSLWVLLSGAGFVVFMLVVIRPGMKWVAKRGSPENDVVRESYVCLTLAGVMVSGFATDLIGIHSIFGAFVFGLTIPKDGEFGQRLIERIEDFVSGLLLPLYFATSGLKTDVAKIRGAESWGMLGLVVVTACAGKIVGTFVVAVMVKVPAREALTLGFLMNTKGLVELIVLNIGKEKKVLNDETFAILVLMALFTTFITTPTVMAIYKPARGTHRKLKDLSASQDSTKEELRILACLHGPANVSSLISLVESIRTTKILRLKLFVMHLMELTERSSSIIMVQRARKNGLPFVHRYRHGERHSNVIGGFEAYRQLGRVAVRPITAVSPLPTMHEDICHMADTKRVTMIILPFHKRWNADHGHSHHHQDGGGDGNVPENVGHGWRLVNQRVLKNAPCSVAVLVDRGLGSIEAQTLSLDGSNVVERVCVIFFGGPDDRESIELGGRMAEHPAVKVTVIRFLVRETLRSTAVTLRPAPSKGKEKNYAFLTTNVDPEKEKELDEGALEDFKSKWKEMVEYKEKEPNNIIEEILSIGQSKDFDLIVVGRGRIPSAEVAALAERQAEHPELGPIGDVLASSINHIIPSILVVQQHNKAHVEDITVSKIVSESSLSINGDTNV.

The next 12 helical transmembrane spans lie at Phe-26–Leu-46, Val-55–Ala-75, Met-86–Leu-106, Gly-122–Ile-142, Tyr-155–Ala-175, Met-193–Leu-213, Leu-228–Ile-248, Phe-283–Ile-303, Phe-320–Ala-340, Leu-353–Val-373, Ala-380–Ile-400, and Ala-413–Ile-433. Positions Asp-585 to Gly-595 are enriched in basic and acidic residues. Residues Asp-585–Val-605 form a disordered region.

Belongs to the monovalent cation:proton antiporter 2 (CPA2) transporter (TC 2.A.37) family. CHX (TC 2.A.37.4) subfamily. In terms of tissue distribution, expressed in leaves and stems. Preferentially expressed in guards cells.

It localises to the endomembrane system. Operates as a K(+)/H(+) antiporter that maintains K(+) homeostasis in guard cells and could regulate pH. Plays a critical role in osmoregulation through the control of stomates opening. The sequence is that of Cation/H(+) antiporter 20 (CHX20) from Arabidopsis thaliana (Mouse-ear cress).